The sequence spans 156 residues: Histone H2B.2 (156 aa).

Composition is skewed to basic and acidic residues over residues 1 to 10 (MAPKKDEKPA) and 24 to 58 (AKAE…GEKK). Residues 1 to 63 (MAPKKDEKPA…DGEKKDKKKK (63 aa)) form a disordered region. Residues lysine 40 and lysine 41 each carry the N6-acetyllysine modification. Lysine 152 is covalently cross-linked (Glycyl lysine isopeptide (Lys-Gly) (interchain with G-Cter in ubiquitin)).

It belongs to the histone H2B family. As to quaternary structure, the nucleosome is a histone octamer containing two molecules each of H2A, H2B, H3 and H4 assembled in one H3-H4 heterotetramer and two H2A-H2B heterodimers. The octamer wraps approximately 147 bp of DNA. The N-terminus is blocked. In terms of processing, can be acetylated to form H2BK33ac and H2BK34ac. Acetylated mainly on the ubiquitinated form. Post-translationally, monoubiquitinated to form H2BK143ub1; which is increased during the light period and may give a specific tag for epigenetic transcriptional activation.

Its subcellular location is the nucleus. It localises to the chromosome. In terms of biological role, core component of nucleosome. Nucleosomes wrap and compact DNA into chromatin, limiting DNA accessibility to the cellular machineries which require DNA as a template. Histones thereby play a central role in transcription regulation, DNA repair, DNA replication and chromosomal stability. DNA accessibility is regulated via a complex set of post-translational modifications of histones, also called histone code, and nucleosome remodeling. The protein is Histone H2B.2 of Chlamydomonas reinhardtii (Chlamydomonas smithii).